A 154-amino-acid chain; its full sequence is Endoribonuclease YbeY (154 aa).

Residues His113, His117, and His123 each contribute to the Zn(2+) site.

Belongs to the endoribonuclease YbeY family. The cofactor is Zn(2+).

The protein resides in the cytoplasm. In terms of biological role, single strand-specific metallo-endoribonuclease involved in late-stage 70S ribosome quality control and in maturation of the 3' terminus of the 16S rRNA. The sequence is that of Endoribonuclease YbeY from Vibrio parahaemolyticus serotype O3:K6 (strain RIMD 2210633).